We begin with the raw amino-acid sequence, 275 residues long: MKEFESIINTAWENKDSINGQSDKSILDAINQTIELVDKGELRVAEKNGNEWVVNQWVKKAIMLSFRTHDMDSLSGPYSSWYDKSHLLKGKTANWTKEDHIKAGFRMVPNSPVRKGSFIGKNAVLMPCFVNIGAYVDEGTMVDTWASVGSCAQIGKNCHISGGAGIGGVLEPMQANPTIIEDNCFIGARSEIVEGVIVGEGSVLSMGVFIGQSTKIVYRETGEVIYGKIPPYSVIVPGSIPSKDGKGPALYCAVIIKQVDEKTRSKTSINDLLRD.

Residues Arg106 and Asp143 each coordinate substrate.

It belongs to the transferase hexapeptide repeat family. As to quaternary structure, homotrimer.

Its subcellular location is the cytoplasm. The enzyme catalyses (S)-2,3,4,5-tetrahydrodipicolinate + succinyl-CoA + H2O = (S)-2-succinylamino-6-oxoheptanedioate + CoA. Its pathway is amino-acid biosynthesis; L-lysine biosynthesis via DAP pathway; LL-2,6-diaminopimelate from (S)-tetrahydrodipicolinate (succinylase route): step 1/3. The polypeptide is 2,3,4,5-tetrahydropyridine-2,6-dicarboxylate N-succinyltransferase (Pelagibacter ubique (strain HTCC1062)).